The primary structure comprises 45 residues: uncharacterized protein (45 aa).

This is an uncharacterized protein from Saccharomyces cerevisiae (strain ATCC 204508 / S288c) (Baker's yeast).